We begin with the raw amino-acid sequence, 1861 residues long: Amylopullulanase (1861 aa).

Residues 1–35 form the signal peptide; the sequence is MNKKLFTNRFISFNMSLLLVLTAVFSSIPLHSVHA. Ca(2+)-binding residues include Asp-248, Asn-250, Asp-288, Asp-343, Asn-401, Asp-403, Asn-406, Asp-407, and Asp-453. Residues His-526 and Arg-626 each contribute to the substrate site. Asp-628 (nucleophile) is an active-site residue. Glu-657 acts as the Proton donor in catalysis. Substrate contacts are provided by residues 733-734, Asp-793, and Arg-797; that span reads HD. 2 Fibronectin type-III domains span residues 929–1021 and 1158–1252; these read APQA…AYPI and KPTA…VVPI. The region spanning 1246–1354 is the CBM20 domain; that stretch reads KPDVVPIKVI…INDTVYRWRD (109 aa). The disordered stretch occupies residues 1448–1486; that stretch reads QENNSGSGTGNNNTSTSGSNSSSTGSGSTGSTSITSNIS. A compositionally biased stretch (low complexity) spans 1450–1486; it reads NNSGSGTGNNNTSTSGSNSSSTGSGSTGSTSITSNIS. 3 consecutive SLH domains span residues 1677-1740, 1741-1799, and 1802-1861; these read EYDK…YSGE, FSDV…KEEN, and ATTF…SGNI.

Belongs to the glycosyl hydrolase 13 family. Requires Ca(2+) as cofactor. Glycosylated.

It is found in the secreted. Its subcellular location is the cell wall. It catalyses the reaction Endohydrolysis of (1-&gt;4)-alpha-D-glucosidic linkages in polysaccharides containing three or more (1-&gt;4)-alpha-linked D-glucose units.. The catalysed reaction is Hydrolysis of (1-&gt;6)-alpha-D-glucosidic linkages in pullulan, amylopectin and glycogen, and in the alpha- and beta-limit dextrins of amylopectin and glycogen.. This is Amylopullulanase (amyB) from Thermoanaerobacterium thermosulfurigenes (Clostridium thermosulfurogenes).